The chain runs to 904 residues: Protein translocase subunit SecA (904 aa).

ATP is bound by residues glutamine 87, 105 to 109 (GEGKT), and aspartate 507. Positions 865 to 887 (GEGAEAAGQQPADAGPKIGRNDP) are disordered. Residues 868–880 (AEAAGQQPADAGP) show a composition bias toward low complexity. Residues cysteine 888, cysteine 890, cysteine 899, and histidine 900 each contribute to the Zn(2+) site.

Belongs to the SecA family. As to quaternary structure, monomer and homodimer. Part of the essential Sec protein translocation apparatus which comprises SecA, SecYEG and auxiliary proteins SecDF-YajC and YidC. It depends on Zn(2+) as a cofactor.

The protein localises to the cell inner membrane. It localises to the cytoplasm. The catalysed reaction is ATP + H2O + cellular proteinSide 1 = ADP + phosphate + cellular proteinSide 2.. Functionally, part of the Sec protein translocase complex. Interacts with the SecYEG preprotein conducting channel. Has a central role in coupling the hydrolysis of ATP to the transfer of proteins into and across the cell membrane, serving both as a receptor for the preprotein-SecB complex and as an ATP-driven molecular motor driving the stepwise translocation of polypeptide chains across the membrane. In Dechloromonas aromatica (strain RCB), this protein is Protein translocase subunit SecA.